The following is a 432-amino-acid chain: Ribosomal protein uS12 methylthiotransferase RimO (432 aa).

The MTTase N-terminal domain maps to 4–122 (KTIDIITLGC…LLQDLGKAYH (119 aa)). C13, C51, C85, C146, C150, and C153 together coordinate [4Fe-4S] cluster. One can recognise a Radical SAM core domain in the interval 132–363 (TTPKHYAYLK…MAIQQGISTE (232 aa)). The TRAM domain occupies 366-432 (ASKVGQKMKV…DEFDLFGEII (67 aa)).

It belongs to the methylthiotransferase family. RimO subfamily. [4Fe-4S] cluster serves as cofactor.

It localises to the cytoplasm. It carries out the reaction L-aspartate(89)-[ribosomal protein uS12]-hydrogen + (sulfur carrier)-SH + AH2 + 2 S-adenosyl-L-methionine = 3-methylsulfanyl-L-aspartate(89)-[ribosomal protein uS12]-hydrogen + (sulfur carrier)-H + 5'-deoxyadenosine + L-methionine + A + S-adenosyl-L-homocysteine + 2 H(+). Catalyzes the methylthiolation of an aspartic acid residue of ribosomal protein uS12. This chain is Ribosomal protein uS12 methylthiotransferase RimO, found in Bacteroides fragilis (strain ATCC 25285 / DSM 2151 / CCUG 4856 / JCM 11019 / LMG 10263 / NCTC 9343 / Onslow / VPI 2553 / EN-2).